The primary structure comprises 427 residues: Gamma-glutamyl phosphate reductase (427 aa).

The protein belongs to the gamma-glutamyl phosphate reductase family.

It is found in the cytoplasm. The enzyme catalyses L-glutamate 5-semialdehyde + phosphate + NADP(+) = L-glutamyl 5-phosphate + NADPH + H(+). The protein operates within amino-acid biosynthesis; L-proline biosynthesis; L-glutamate 5-semialdehyde from L-glutamate: step 2/2. Catalyzes the NADPH-dependent reduction of L-glutamate 5-phosphate into L-glutamate 5-semialdehyde and phosphate. The product spontaneously undergoes cyclization to form 1-pyrroline-5-carboxylate. This is Gamma-glutamyl phosphate reductase from Anaeromyxobacter dehalogenans (strain 2CP-1 / ATCC BAA-258).